Consider the following 188-residue polypeptide: GTP-dependent dephospho-CoA kinase (188 aa).

Residues D43, V44, D62, E121, and D144 each coordinate GTP.

Belongs to the GTP-dependent DPCK family.

It catalyses the reaction 3'-dephospho-CoA + GTP = GDP + CoA + H(+). It functions in the pathway cofactor biosynthesis; coenzyme A biosynthesis. Functionally, catalyzes the GTP-dependent phosphorylation of the 3'-hydroxyl group of dephosphocoenzyme A to form coenzyme A (CoA). The protein is GTP-dependent dephospho-CoA kinase of Methanococcoides burtonii (strain DSM 6242 / NBRC 107633 / OCM 468 / ACE-M).